The following is an 835-amino-acid chain: Protein translocase subunit SecA (835 aa).

Residues Gln85, 103 to 107, and Asp492 each bind ATP; that span reads GEGKT. A disordered region spans residues 788 to 807; the sequence is VQGEAVHPSSDGEEAKKKPV. The Zn(2+) site is built by Cys819, Cys821, Cys830, and Cys831.

This sequence belongs to the SecA family. In terms of assembly, monomer and homodimer. Part of the essential Sec protein translocation apparatus which comprises SecA, SecYEG and auxiliary proteins SecDF. Other proteins may also be involved. Requires Zn(2+) as cofactor.

It is found in the cell membrane. The protein localises to the cytoplasm. The enzyme catalyses ATP + H2O + cellular proteinSide 1 = ADP + phosphate + cellular proteinSide 2.. Part of the Sec protein translocase complex. Interacts with the SecYEG preprotein conducting channel. Has a central role in coupling the hydrolysis of ATP to the transfer of proteins into and across the cell membrane, serving as an ATP-driven molecular motor driving the stepwise translocation of polypeptide chains across the membrane. The chain is Protein translocase subunit SecA from Bacillus cereus (strain ATCC 14579 / DSM 31 / CCUG 7414 / JCM 2152 / NBRC 15305 / NCIMB 9373 / NCTC 2599 / NRRL B-3711).